Consider the following 328-residue polypeptide: Malate dehydrogenase (328 aa).

11–17 contributes to the NAD(+) binding site; the sequence is GAAGQIG. 2 residues coordinate substrate: arginine 94 and arginine 100. Residues asparagine 107, glutamine 114, and 131–133 contribute to the NAD(+) site; that span reads VGN. Positions 133 and 164 each coordinate substrate. The Proton acceptor role is filled by histidine 189.

The protein belongs to the LDH/MDH superfamily. MDH type 2 family.

The catalysed reaction is (S)-malate + NAD(+) = oxaloacetate + NADH + H(+). Functionally, catalyzes the reversible oxidation of malate to oxaloacetate. The protein is Malate dehydrogenase of Acinetobacter baylyi (strain ATCC 33305 / BD413 / ADP1).